Consider the following 1166-residue polypeptide: Calcium-activated potassium channel subunit alpha-1 (1166 aa).

Positions Met1 to Ser15 are enriched in gly residues. Disordered regions lie at residues Met1–Ser20 and Leu30–Glu51. Topologically, residues Met1–Met74 are extracellular. Residues Ser33–Ser48 are compositionally biased toward low complexity. A helical membrane pass occupies residues Trp75 to Leu95. At Trp96 to Arg166 the chain is on the cytoplasmic side. S-palmitoyl cysteine attachment occurs at residues Cys106, Cys107, and Cys109. Thr139 carries the post-translational modification Phosphothreonine; by CamK2. A helical membrane pass occupies residues Val167–Ser187. Residues Ser188 to Thr202 lie on the Extracellular side of the membrane. The chain crosses the membrane as a helical span at residues Leu203–Ala223. Residues Ala224–Lys227 are Cytoplasmic-facing. Residues Leu228–Val248 traverse the membrane as a helical segment. The Extracellular segment spans residues Ser249–Leu252. Residues Asn253–Ile273 form a helical; Voltage-sensor membrane-spanning segment. At Leu274 to Leu288 the chain is on the cytoplasmic side. The helical transmembrane segment at Val289 to Val309 threads the bilayer. Residues Glu310 to Gln323 lie on the Extracellular side of the membrane. The pore-forming intramembrane region spans Ala324–Val346. The Selectivity for potassium signature appears at Thr340–Tyr343. Over Tyr347 to Leu355 the chain is Extracellular. A helical transmembrane segment spans residues Phe356–Ile376. Topologically, residues Glu377 to Leu1166 are cytoplasmic. Residues Arg395–Ile537 form the RCK N-terminal 1 domain. Mg(2+) is bound by residues Glu427, Gln450, and Glu452. A segment S7 region spans residues Leu544–Phe564. Residues Leu601–Ile621 form a segment S8 region. Residues Cys665–His669 form a heme-binding motif region. The tract at residues Glu689–Arg717 is disordered. A Phosphothreonine modification is found at Thr693. Ser695, Ser708, and Ser712 each carry phosphoserine. A segment S9 region spans residues Val767–Leu787. The RCK N-terminal 2 domain maps to Ser769–Pro913. Position 900 is a phosphothreonine (Thr900). A phosphoserine mark is found at Ser908 and Ser912. Residues Thr933 to Glu955 carry the Calcium bowl motif. Residues Gln942, Asp945, Asp948, and Asp950 each coordinate Ca(2+). Positions Phe962–Phe982 are segment S10. The segment covering Arg1116–Ser1141 has biased composition (low complexity). Residues Arg1116–Leu1166 form a disordered region. The segment covering Lys1150–Leu1166 has biased composition (basic and acidic residues). Ser1151 and Ser1154 each carry phosphoserine; by PKG.

This sequence belongs to the potassium channel family. Calcium-activated (TC 1.A.1.3) subfamily. KCa1.1/KCNMA1 sub-subfamily. In terms of assembly, homotetramer; which constitutes the calcium-activated potassium channel. Interacts with beta subunits KCNMB1, KCNMB2, KCNMB3 and KCNMB4. Interacts with gamma subunits LRRC26, LRRC38, LRRC52 and LRRC55. Beta and gamma subunits are accessory, and modulate its activity. Interacts with RAB11B. Phosphorylated. Stimulated by PKG, but not by PKA. In smooth muscles, phosphorylation affects its activity. Post-translationally, phosphorylated. Exclusively stimulated by PKA. In smooth muscles, phosphorylation affects its activity. In terms of processing, incremental phosphorylation of Thr-139 of the KCNMA1 tetramer changes the response to ethanol from increased activation to inhibition of channel activity. Palmitoylation by ZDHHC22 and ZDHHC23 within the intracellular linker between the S0 and S1 transmembrane domains regulates localization to the plasma membrane. Depalmitoylated by LYPLA1 and LYPLAL1, leading to retard exit from the trans-Golgi network.

It is found in the cell membrane. The enzyme catalyses K(+)(in) = K(+)(out). Its activity is regulated as follows. Ethanol and carbon monoxide-bound heme increase channel activation. Heme inhibits channel activation. Phosphorylation of Thr-139 leads to inhibition of channel activity by ethanol. Its function is as follows. Potassium channel activated by both membrane depolarization or increase in cytosolic Ca(2+) that mediates export of K(+). It is also activated by concentration of cytosolic Mg(2+). Its activation dampens the excitatory events that elevate the cytosolic Ca(2+) concentration and/or depolarize the cell membrane. It therefore contributes to repolarization of the membrane potential. Plays a key role in controlling excitability in a number of systems, such as regulation of the contraction of smooth muscle, the tuning of hair cells in the cochlea, regulation of transmitter release, and innate immunity. In smooth muscles, its activation by high level of Ca(2+), caused by ryanodine receptors in the sarcoplasmic reticulum, regulates the membrane potential. In cochlea cells, its number and kinetic properties partly determine the characteristic frequency of each hair cell and thereby helps to establish a tonotopic map. Kinetics of KCNMA1 channels are determined by alternative splicing, phosphorylation status and its combination with modulating beta subunits. Highly sensitive to both iberiotoxin (IbTx) and charybdotoxin (CTX). The chain is Calcium-activated potassium channel subunit alpha-1 (KCNMA1) from Bos taurus (Bovine).